The chain runs to 793 residues: uncharacterized protein (793 aa).

A signal peptide spans 1–22 (MKFKYGAIFFSGFLGLSAILAA). Cysteine 23 carries the N-palmitoyl cysteine lipid modification. Cysteine 23 is lipidated: S-diacylglycerol cysteine. Disordered stretches follow at residues 181 to 200 (LNQKMTSSSEGKNSSGTLTV), 212 to 264 (KIED…DDQV), and 444 to 504 (KAPS…SNNN). Residues 212–227 (KIEDSAKANGKSDEKG) show a composition bias toward basic and acidic residues. Residues 237-246 (ATFSLVQLKQ) show a composition bias toward polar residues. Residues 247–264 (TQEKTDDSQDTKNSDDQV) show a composition bias toward basic and acidic residues. Polar residues predominate over residues 449–468 (NGENGQTNEGNSTNGEQNLL). Over residues 472–485 (EVKDDSKPKEEVKS) the composition is skewed to basic and acidic residues. Low complexity predominate over residues 491 to 504 (KESSQNQGKKSNNN).

It belongs to the MG185/MG260 family.

It localises to the cell membrane. This is an uncharacterized protein from Mycoplasma pneumoniae (strain ATCC 29342 / M129 / Subtype 1) (Mycoplasmoides pneumoniae).